Here is a 577-residue protein sequence, read N- to C-terminus: MNIQALLSEKVRQAMIAAGAPADCEPQVRQSAKVQFGDYQANGMMAVAKKLGMAPRQLAEQVLTHLDLNGIASKVEIAGPGFINIFLDPAFLAEHVQQALASDRLGVATPEKQTIVVDYSAPNVAKEMHVGHLRSTIIGDAAVRTLEFLGHKVIRANHVGDWGTQFGMLIAWLEKQQQENAGEMELADLEGFYRDAKKHYDEDEEFAERARNYVVKLQSGDEYFREMWRKLVDITMTQNQITYDRLNVTLTRDDVMGESLYNPMLPGIVADLKAKGLAVESEGATVVFLDEFKNKEGEPMGVIIQKKDGGYLYTTTDIACAKYRYETLHADRVLYYIDSRQHQHLMQAWAIVRKAGYVPESVPLEHHMFGMMLGKDGKPFKTRAGGTVKLADLLDEALERARRLVAEKNPDMPADELEKLANAVGIGAVKYADLSKNRTTDYIFDWDNMLAFEGNTAPYMQYAYTRVLSVFRKAEINEEQLAAAPVIIREDREAQLAARLLQFEETLTVVAREGTPHVMCAYLYDLAGLFSGFYEHCPILSAENEEVRNSRLKLAQLTAKTLKLGLDTLGIETVERM.

A 'HIGH' region motif is present at residues 122–132 (PNVAKEMHVGH).

The protein belongs to the class-I aminoacyl-tRNA synthetase family. In terms of assembly, monomer.

It is found in the cytoplasm. It catalyses the reaction tRNA(Arg) + L-arginine + ATP = L-arginyl-tRNA(Arg) + AMP + diphosphate. This Escherichia coli (strain ATCC 8739 / DSM 1576 / NBRC 3972 / NCIMB 8545 / WDCM 00012 / Crooks) protein is Arginine--tRNA ligase.